Reading from the N-terminus, the 96-residue chain is Small ribosomal subunit protein bS6 (96 aa).

It belongs to the bacterial ribosomal protein bS6 family.

In terms of biological role, binds together with bS18 to 16S ribosomal RNA. The protein is Small ribosomal subunit protein bS6 (rpsF) of Mycobacterium bovis (strain ATCC BAA-935 / AF2122/97).